Consider the following 409-residue polypeptide: Translation initiation factor 2 subunit gamma (409 aa).

One can recognise a tr-type G domain in the interval Gln7 to Asp203. Residues Gly16–Thr23 form a G1 region. Positions 19, 23, 44, and 46 each coordinate Mg(2+). Asp19 to Thr24 is a binding site for GTP. Residues Gly44 to Arg48 form a G2 region. A G3 region spans residues Asp90–Gly93. GTP-binding positions include Asn146–Asp149 and Ser181–Gln183. Positions Asn146 to Asp149 are G4. A G5 region spans residues Ser181–Gln183.

It belongs to the TRAFAC class translation factor GTPase superfamily. Classic translation factor GTPase family. EIF2G subfamily. Heterotrimer composed of an alpha, a beta and a gamma chain. Mg(2+) is required as a cofactor.

The catalysed reaction is GTP + H2O = GDP + phosphate + H(+). Functionally, eIF-2 functions in the early steps of protein synthesis by forming a ternary complex with GTP and initiator tRNA. The polypeptide is Translation initiation factor 2 subunit gamma (Natronomonas pharaonis (strain ATCC 35678 / DSM 2160 / CIP 103997 / JCM 8858 / NBRC 14720 / NCIMB 2260 / Gabara) (Halobacterium pharaonis)).